We begin with the raw amino-acid sequence, 307 residues long: Taste receptor type 2 member 10 (307 aa).

The Extracellular segment spans residues 1-6 (MLRVVE). Residues 7–27 (GIFIFVVISEXVFGVLGNGFI) traverse the membrane as a helical segment. The Cytoplasmic segment spans residues 28-42 (GLVNCIDCAKNKLST). Residues 43-63 (IGFILTGLAISRIFLIWIIIT) form a helical membrane-spanning segment. The Extracellular segment spans residues 64–100 (DGFIQIFSPDIYASGNLIEYISYFWVIGNQSSMWFAT). N-linked (GlcNAc...) asparagine glycosylation is present at asparagine 92. The helical transmembrane segment at 101–121 (SLSIFYFLKIANFSNYIFLWL) threads the bilayer. The Cytoplasmic portion of the chain corresponds to 122–126 (KSRTN). A helical membrane pass occupies residues 127-147 (MVLPFMIVFLLISSLLNFAHI). Residues 148–179 (AKILNDYKMKNDTVWDLNMYKSEYFIKQILLN) are Extracellular-facing. N-linked (GlcNAc...) asparagine glycosylation occurs at asparagine 158. The chain crosses the membrane as a helical span at residues 180 to 200 (LGVIFFFTLSLITCVFLIISL). Topologically, residues 201–227 (WRHNRQMQSNVTGLRDSNTEAHVKAMK) are cytoplasmic. A helical membrane pass occupies residues 228–248 (VLISFXILFILYFIGMAIEIS). Residues 249–257 (CFTVRENKL) are Extracellular-facing. The chain crosses the membrane as a helical span at residues 258–278 (LLMFGMTTTAIYPWGHSFILI). Topologically, residues 279–307 (LGNSKLKQASLRVLQQLKCCEKRKNLRVT) are cytoplasmic.

Belongs to the G-protein coupled receptor T2R family.

The protein resides in the membrane. In terms of biological role, receptor that may play a role in the perception of bitterness and is gustducin-linked. May play a role in sensing the chemical composition of the gastrointestinal content. The activity of this receptor may stimulate alpha gustducin, mediate PLC-beta-2 activation and lead to the gating of TRPM5. The sequence is that of Taste receptor type 2 member 10 (TAS2R10) from Gorilla gorilla gorilla (Western lowland gorilla).